A 149-amino-acid chain; its full sequence is MNDTVLVLNGPNLNLLGKRQPEIYGRETLADVEALCRETAAGFGLAVDFRQSNAEHALIDAIHEFRVGSAGIVINAGAYTHTSVALLDALNTCEVPVIECHISNVHRREAFRHHSYISLAATSVLAGFGTHGYALAIRHLAHLRAGRPA.

The Proton acceptor role is filled by Tyr-24. Substrate is bound by residues Asn-75, His-81, and Asp-88. The Proton donor role is filled by His-101. Substrate is bound by residues Ile-102–Ser-103 and Arg-112.

It belongs to the type-II 3-dehydroquinase family. In terms of assembly, homododecamer.

It catalyses the reaction 3-dehydroquinate = 3-dehydroshikimate + H2O. Its pathway is metabolic intermediate biosynthesis; chorismate biosynthesis; chorismate from D-erythrose 4-phosphate and phosphoenolpyruvate: step 3/7. Catalyzes a trans-dehydration via an enolate intermediate. In Methylobacterium radiotolerans (strain ATCC 27329 / DSM 1819 / JCM 2831 / NBRC 15690 / NCIMB 10815 / 0-1), this protein is 3-dehydroquinate dehydratase.